A 494-amino-acid chain; its full sequence is DnaJ-related protein rsp1 (494 aa).

The J domain occupies 12 to 78 (DYYTILGAES…KLRELFDQRR (67 aa)). A compositionally biased stretch (polar residues) spans 229 to 242 (SEISNGLNSNGVEN). Residues 229 to 354 (SEISNGLNSN…NDSTSNSTEY (126 aa)) form a disordered region. Positions 243-256 (SSITKSSPRSSSSS) are enriched in low complexity. Over residues 270-287 (IFTSPNTPEHPSVYQTDI) the composition is skewed to polar residues. Over residues 321–331 (LSRSKSSSLSR) the composition is skewed to low complexity. Positions 332 to 354 (NQTRSQLNDLSAENDSTSNSTEY) are enriched in polar residues.

Interacts iwth ssa1.

It localises to the cytoplasm. The protein resides in the cytoskeleton. The protein localises to the nucleus. Functionally, has a role in the proper organization of the interphase microtubule cytoskeleton. Required for equatorial microtubule organizing center (eMTOC) disassembly into satellites, contributing to the dynamic redistribution of MTOC components for organization of interphase microtubules. This chain is DnaJ-related protein rsp1 (rsp1), found in Schizosaccharomyces pombe (strain 972 / ATCC 24843) (Fission yeast).